Here is a 477-residue protein sequence, read N- to C-terminus: MTVVTRFAPSPTGFLHIGGGRTALFNWLFARHHGGKFLLRIEDTDRARSTDAAVEAIFDGIKWLGLDWDGEAVMQFARACRHAEVARQLLDEGKAYRCYCTQDELTAIREEQKAKGQPMRYPGIWRDRPATDAPEGAPFVVRLKAPAEGETIIADLVQGDVRVANDQLDDMVLLRADGTPTYMLSVVVDDHDMGITHVIRGDDHLTNAFRQYQLYKACGWEVPTFAHIPLIHGPDGAKLSKRHGALGVDAYRDMGFLPEAMRNYLLRLGWSHGDDEIISTEQAVEWFTLDSVGRSPSRFDFVKLTNLNGHYMRGADDGRLTEVLVPLLEAKTGKALSGESVARLRTGMTGLKERAKTMVELADSALFYVAERPLALDEKAAKTMADETATADLAAYRTEVKELGAWTRDTLEDAARRLAEARGQKLGKIAQPLRAALAGSSVSPPIFEVMEVLGREESLGRIEDALGGTRPTTSTAA.

A 'HIGH' region motif is present at residues 9 to 19; sequence PSPTGFLHIGG. Positions 238 to 242 match the 'KMSKS' region motif; that stretch reads KLSKR. Lysine 241 contacts ATP.

It belongs to the class-I aminoacyl-tRNA synthetase family. Glutamate--tRNA ligase type 1 subfamily. In terms of assembly, monomer.

Its subcellular location is the cytoplasm. It carries out the reaction tRNA(Glu) + L-glutamate + ATP = L-glutamyl-tRNA(Glu) + AMP + diphosphate. Its function is as follows. Catalyzes the attachment of glutamate to tRNA(Glu) in a two-step reaction: glutamate is first activated by ATP to form Glu-AMP and then transferred to the acceptor end of tRNA(Glu). The chain is Glutamate--tRNA ligase 2 from Paramagnetospirillum magneticum (strain ATCC 700264 / AMB-1) (Magnetospirillum magneticum).